Here is a 112-residue protein sequence, read N- to C-terminus: Protein AV2 (112 aa).

Belongs to the geminiviridae protein AV2/V2 family. In terms of assembly, interacts with host SGS3.

It is found in the host cytoplasm. The protein localises to the host perinuclear region. Through its interaction with host SGS3, acts as a suppressor of RNA-mediated gene silencing, also known as post-transcriptional gene silencing (PTGS), a mechanism of plant viral defense that limits the accumulation of viral RNAs. This chain is Protein AV2, found in Indian cassava mosaic virus (ICMV).